Consider the following 101-residue polypeptide: Olivetolic acid cyclase (101 aa).

Residues 3–97 (VKHLIVLKFK…FWEKLLIFDY (95 aa)) enclose the Stress-response A/B barrel domain. Position 5 (H5) interacts with 3,5,7-trioxododecanoyl-CoA. Residues V31, I34, and M37 each contribute to the Mg(2+) site. 3,5,7-trioxododecanoyl-CoA is bound at residue Y72. Catalysis depends on acid/base catalyst residues Y72 and H75.

As to quaternary structure, homodimer. As to expression, expressed in glandular trichomes and at lower levels in female flowers.

The protein resides in the cytoplasm. It catalyses the reaction 3,5,7-trioxododecanoyl-CoA = olivetolate + CoA + H(+). It functions in the pathway secondary metabolite biosynthesis; terpenoid biosynthesis. In terms of biological role, involved in the biosynthesis of cannabinoids-related terpenophenolic natural products, which have pharmacological activity. Polyketide cyclase which functions in concert with OLS/TKS to form olivetolic acid. Has no intrinsic polyketide synthase activity and requires the presence of OLS to produce olivetolic acid. In Cannabis sativa (Hemp), this protein is Olivetolic acid cyclase.